We begin with the raw amino-acid sequence, 334 residues long: GTP 3',8-cyclase (334 aa).

The Radical SAM core domain occupies 11-235 (GFNRKVDYLR…VESAESSQGP (225 aa)). Arg-20 contributes to the GTP binding site. The [4Fe-4S] cluster site is built by Cys-27 and Cys-31. Residue Tyr-33 participates in S-adenosyl-L-methionine binding. [4Fe-4S] cluster is bound at residue Cys-34. Arg-69 contacts GTP. Gly-73 is a binding site for S-adenosyl-L-methionine. Thr-100 is a binding site for GTP. Ser-124 contacts S-adenosyl-L-methionine. Lys-161 serves as a coordination point for GTP. An S-adenosyl-L-methionine-binding site is contributed by Met-195. [4Fe-4S] cluster-binding residues include Cys-260 and Cys-263. 265–267 (RVR) provides a ligand contact to GTP. Cys-277 contacts [4Fe-4S] cluster.

This sequence belongs to the radical SAM superfamily. MoaA family. In terms of assembly, monomer and homodimer. [4Fe-4S] cluster serves as cofactor.

It carries out the reaction GTP + AH2 + S-adenosyl-L-methionine = (8S)-3',8-cyclo-7,8-dihydroguanosine 5'-triphosphate + 5'-deoxyadenosine + L-methionine + A + H(+). It participates in cofactor biosynthesis; molybdopterin biosynthesis. In terms of biological role, catalyzes the cyclization of GTP to (8S)-3',8-cyclo-7,8-dihydroguanosine 5'-triphosphate. This Pseudomonas entomophila (strain L48) protein is GTP 3',8-cyclase.